We begin with the raw amino-acid sequence, 428 residues long: Ribosome biogenesis protein WDR12 homolog (428 aa).

A ubiquitin-like (UBL) domain region spans residues 13 to 97; the sequence is LQVHFTTKQK…EDTIELEYVE (85 aa). WD repeat units follow at residues 109-146, 148-190, 197-236, 259-297, 299-338, 344-384, and 388-426; these read LHDD…KLTI, GHVA…NTAE, GHER…DKGE, GHRE…IKTE, TGNK…GNFV, GHSQ…APIF, and GHED…DNTK.

The protein belongs to the WD repeat WDR12/YTM1 family.

The protein localises to the nucleus. It localises to the nucleolus. It is found in the nucleoplasm. In terms of biological role, required for maturation of ribosomal RNAs and formation of the large ribosomal subunit. This chain is Ribosome biogenesis protein WDR12 homolog, found in Anopheles gambiae (African malaria mosquito).